We begin with the raw amino-acid sequence, 135 residues long: Ribosome-binding factor A (135 aa).

Belongs to the RbfA family. In terms of assembly, monomer. Binds 30S ribosomal subunits, but not 50S ribosomal subunits or 70S ribosomes.

The protein localises to the cytoplasm. Its function is as follows. One of several proteins that assist in the late maturation steps of the functional core of the 30S ribosomal subunit. Associates with free 30S ribosomal subunits (but not with 30S subunits that are part of 70S ribosomes or polysomes). Required for efficient processing of 16S rRNA. May interact with the 5'-terminal helix region of 16S rRNA. This is Ribosome-binding factor A from Bartonella tribocorum (strain CIP 105476 / IBS 506).